The following is a 384-amino-acid chain: MDAPIKAPTALNTEKARALAVALAQIEKQFGKGTIMKLGAGEVIEDIQVVSTGSLGLDIALGVGGLPRGRVVEIYGPESSGKTTLTLQVIAEMQKIGGTCAFVDAEHALDIQYAQKLGVNLQELLISQPDTGEQALEIVDSLTRSGAVDLIVIDSVAALTPKAELEGEMGDSLPGLQARLMSQALRKLTATIKKANCMVIFINQIRMKIGVMFGSPETTTGGNALKFYASVRLDIRRIGSIKKGDEVIGNETRVKVVKNKVASPFKMAEFDILYGEGISRLGEVLDLGVANHVVEKAGAWYAYRGEKIGQGRDNSREFLKENPALAIEIENKVREALGIPLVQAAQGSAEPEKAAKPEKVEKADKPVKAVVDKTLAAPLAPVAS.

Residue 76–83 coordinates ATP; the sequence is GPESSGKT. Residues 346-365 form a disordered region; the sequence is QGSAEPEKAAKPEKVEKADK. A compositionally biased stretch (basic and acidic residues) spans 350-365; it reads EPEKAAKPEKVEKADK.

This sequence belongs to the RecA family.

It localises to the cytoplasm. Its function is as follows. Can catalyze the hydrolysis of ATP in the presence of single-stranded DNA, the ATP-dependent uptake of single-stranded DNA by duplex DNA, and the ATP-dependent hybridization of homologous single-stranded DNAs. It interacts with LexA causing its activation and leading to its autocatalytic cleavage. In Polaromonas naphthalenivorans (strain CJ2), this protein is Protein RecA.